The primary structure comprises 131 residues: Large ribosomal subunit protein bL12 (131 aa).

This sequence belongs to the bacterial ribosomal protein bL12 family. As to quaternary structure, homodimer. Part of the ribosomal stalk of the 50S ribosomal subunit. Forms a multimeric L10(L12)X complex, where L10 forms an elongated spine to which 2 to 4 L12 dimers bind in a sequential fashion. Binds GTP-bound translation factors.

Forms part of the ribosomal stalk which helps the ribosome interact with GTP-bound translation factors. Is thus essential for accurate translation. The protein is Large ribosomal subunit protein bL12 of Tropheryma whipplei (strain Twist) (Whipple's bacillus).